Here is a 231-residue protein sequence, read N- to C-terminus: ATP phosphoribosyltransferase (231 aa).

This sequence belongs to the ATP phosphoribosyltransferase family. Short subfamily. In terms of assembly, heteromultimer composed of HisG and HisZ subunits.

The protein resides in the cytoplasm. It catalyses the reaction 1-(5-phospho-beta-D-ribosyl)-ATP + diphosphate = 5-phospho-alpha-D-ribose 1-diphosphate + ATP. The protein operates within amino-acid biosynthesis; L-histidine biosynthesis; L-histidine from 5-phospho-alpha-D-ribose 1-diphosphate: step 1/9. Functionally, catalyzes the condensation of ATP and 5-phosphoribose 1-diphosphate to form N'-(5'-phosphoribosyl)-ATP (PR-ATP). Has a crucial role in the pathway because the rate of histidine biosynthesis seems to be controlled primarily by regulation of HisG enzymatic activity. The chain is ATP phosphoribosyltransferase from Brucella anthropi (strain ATCC 49188 / DSM 6882 / CCUG 24695 / JCM 21032 / LMG 3331 / NBRC 15819 / NCTC 12168 / Alc 37) (Ochrobactrum anthropi).